Reading from the N-terminus, the 250-residue chain is ADPR responsive transcriptional repressor NtrR (250 aa).

The Nudix hydrolase domain occupies 26 to 157; the sequence is LMTVDMAIFS…DHHDLLQQAF (132 aa). A Nudix box motif is present at residues 62 to 85; sequence GFVDLEQDQNLMACAHRKLLEKTG. The interval 164 to 237 is winged helix-like DNA-binding region; the sequence is TRYTALPISL…RFALQDYDFN (74 aa).

Its activity is regulated as follows. DNA binding is efficiently suppressed in the presence of ADP-ribose (ADPR) or phospho-ADPR. Accumulation of ADPR resulting from NAD degradation may be interpreted by the cell as a signal to activate recycling of nicotinamide. In terms of biological role, involved in the transcriptional regulation of the nondeamidating salvage pathway for production of NAD from nicotinamide. Represses expression of the prs-nadV-nrtR operon by binding to the DNA region located upstream of the operon, thus blocking the nondeamidating pathway. The chain is ADPR responsive transcriptional repressor NtrR from Acinetobacter baylyi (strain ATCC 33305 / BD413 / ADP1).